Reading from the N-terminus, the 83-residue chain is Mu-theraphotoxin-Hhn2j 4 (83 aa).

The first 21 residues, 1–21, serve as a signal peptide directing secretion; the sequence is MKASMFLALAGLVLLFVVGYA. The propeptide occupies 22–48; sequence SESEEKEFPIELLSKIFAVDVFKGEGR. 3 disulfides stabilise this stretch: Cys-50–Cys-65, Cys-57–Cys-70, and Cys-64–Cys-77. Leu-81 is modified (leucine amide).

Belongs to the neurotoxin 10 (Hwtx-1) family. 15 (Hntx-3) subfamily. In terms of assembly, monomer. In terms of tissue distribution, expressed by the venom gland.

The protein resides in the secreted. Its function is as follows. Lethal neurotoxin. Selectively blocks tetrodotoxin-sensitive voltage-gated sodium channels (Nav). Does not affect tetrodotoxin-resistant voltage-gated sodium channels or calcium channels. In Cyriopagopus hainanus (Chinese bird spider), this protein is Mu-theraphotoxin-Hhn2j 4.